The chain runs to 82 residues: uncharacterized protein (82 aa).

In terms of biological role, could be a silencing control element for the regulation of the restriction system. This is an uncharacterized protein from Herpetosiphon aurantiacus (Herpetosiphon giganteus).